Here is a 343-residue protein sequence, read N- to C-terminus: 4-hydroxy-2-oxovalerate aldolase 1 (343 aa).

In terms of domain architecture, Pyruvate carboxyltransferase spans 8 to 260 (VTVHDMTLRD…ETGVDVAKIT (253 aa)). Substrate is bound at residue 16 to 17 (RD). Asp-17 contributes to the Mn(2+) binding site. Catalysis depends on His-20, which acts as the Proton acceptor. Residues Ser-170 and His-199 each contribute to the substrate site. 2 residues coordinate Mn(2+): His-199 and His-201. Tyr-290 serves as a coordination point for substrate.

It belongs to the 4-hydroxy-2-oxovalerate aldolase family.

The catalysed reaction is (S)-4-hydroxy-2-oxopentanoate = acetaldehyde + pyruvate. The chain is 4-hydroxy-2-oxovalerate aldolase 1 from Dechloromonas aromatica (strain RCB).